Reading from the N-terminus, the 274-residue chain is Cytochrome b-c1 complex subunit Rieske, mitochondrial (274 aa).

Over 79 to 103 the chain is Mitochondrial matrix; it reads SHTDVRVPDFSEYRRLEVLDSTKSS. The helical transmembrane segment at 104-140 threads the bilayer; it reads RESSEARKGFSYLVTGVTTVGVAYAAKNVVTQFVSSM. At 141–274 the chain is on the mitochondrial intermembrane side; that stretch reads SASADVLALA…FTSDDMVIVG (134 aa). The Rieske domain maps to 187-272; the sequence is EAAVELSQLR…YEFTSDDMVI (86 aa). Cys-217, His-219, Cys-236, His-239, and Ser-241 together coordinate [2Fe-2S] cluster. Cys-222 and Cys-238 form a disulfide bridge.

The protein belongs to the Rieske iron-sulfur protein family. Component of the ubiquinol-cytochrome c oxidoreductase (cytochrome b-c1 complex, complex III, CIII), a multisubunit enzyme composed of 11 subunits. The complex is composed of 3 respiratory subunits cytochrome b, cytochrome c1 and Rieske protein UQCRFS1, 2 core protein subunits UQCRC1/QCR1 and UQCRC2/QCR2, and 6 low-molecular weight protein subunits UQCRH/QCR6, UQCRB/QCR7, UQCRQ/QCR8, UQCR10/QCR9, UQCR11/QCR10 and subunit 9, the cleavage product of Rieske protein UQCRFS1. The complex exists as an obligatory dimer and forms supercomplexes (SCs) in the inner mitochondrial membrane with NADH-ubiquinone oxidoreductase (complex I, CI) and cytochrome c oxidase (complex IV, CIV), resulting in different assemblies (supercomplex SCI(1)III(2)IV(1) and megacomplex MCI(2)III(2)IV(2)). Incorporation of the Rieske protein UQCRFS1 is the penultimate step in complex III assembly. Interacts with TTC19, which is involved in the clearance of UQCRFS1 fragments. As to quaternary structure, component of the ubiquinol-cytochrome c oxidoreductase (cytochrome b-c1 complex, complex III, CIII). Subunit 9 corresponds to the mitochondrial targeting sequence (MTS) of Rieske protein UQCRFS1. It is retained after processing and incorporated inside complex III, where it remains bound to the complex and localizes between the 2 core subunits UQCRC1/QCR1 and UQCRC2/QCR2. [2Fe-2S] cluster is required as a cofactor. Post-translationally, proteolytic processing is necessary for the correct insertion of UQCRFS1 in the complex III dimer. Several fragments are generated during UQCRFS1 insertion, most probably due to the endogenous matrix-processing peptidase (MPP) activity of the 2 core protein subunits UQCRC1/QCR1 and UQCRC2/QCR2, which are homologous to the 2 mitochondrial-processing peptidase (MPP) subunits beta-MPP and alpha-MPP respectively. The action of the protease is also necessary for the clearance of the UQCRFS1 fragments.

The protein resides in the mitochondrion inner membrane. The catalysed reaction is a quinol + 2 Fe(III)-[cytochrome c](out) = a quinone + 2 Fe(II)-[cytochrome c](out) + 2 H(+)(out). In terms of biological role, component of the ubiquinol-cytochrome c oxidoreductase, a multisubunit transmembrane complex that is part of the mitochondrial electron transport chain which drives oxidative phosphorylation. The respiratory chain contains 3 multisubunit complexes succinate dehydrogenase (complex II, CII), ubiquinol-cytochrome c oxidoreductase (cytochrome b-c1 complex, complex III, CIII) and cytochrome c oxidase (complex IV, CIV), that cooperate to transfer electrons derived from NADH and succinate to molecular oxygen, creating an electrochemical gradient over the inner membrane that drives transmembrane transport and the ATP synthase. The cytochrome b-c1 complex catalyzes electron transfer from ubiquinol to cytochrome c, linking this redox reaction to translocation of protons across the mitochondrial inner membrane, with protons being carried across the membrane as hydrogens on the quinol. In the process called Q cycle, 2 protons are consumed from the matrix, 4 protons are released into the intermembrane space and 2 electrons are passed to cytochrome c. The Rieske protein is a catalytic core subunit containing a [2Fe-2S] iron-sulfur cluster. It cycles between 2 conformational states during catalysis to transfer electrons from the quinol bound in the Q(0) site in cytochrome b to cytochrome c1. Incorporation of UQCRFS1 is the penultimate step in complex III assembly. Its function is as follows. Component of the ubiquinol-cytochrome c oxidoreductase (cytochrome b-c1 complex, complex III, CIII). UQCRFS1 undergoes proteolytic processing once it is incorporated in the complex III dimer. One of the fragments, called subunit 9, corresponds to its mitochondrial targeting sequence (MTS). The proteolytic processing is necessary for the correct insertion of UQCRFS1 in the complex III dimer, but the persistence of UQCRFS1-derived fragments may prevent newly imported UQCRFS1 to be processed and assembled into complex III and is detrimental for the complex III structure and function. The sequence is that of Cytochrome b-c1 complex subunit Rieske, mitochondrial (UQCRFS1) from Pongo pygmaeus (Bornean orangutan).